The chain runs to 644 residues: uncharacterized protein (644 aa).

The interval 1 to 35 (MKANGLDNDPARTGMERTDIDSEHPEAQPLLNNNH) is disordered. Over 1 to 90 (MKANGLDNDP…ILNILILINT (90 aa)) the chain is Cytoplasmic. Basic and acidic residues predominate over residues 14-26 (GMERTDIDSEHPE). Residues Ser-22, Ser-56, and Ser-63 each carry the phosphoserine modification. Residues 91–111 (IWLVTTLISDFFFNINILFGF) traverse the membrane as a helical segment. The Vacuolar portion of the chain corresponds to 112-122 (SNRYASFNDLT). A helical membrane pass occupies residues 123–143 (LIFISIIANSFNLWFNKLGLY). At 144–147 (SALD) the chain is on the cytoplasmic side. Residues 148–168 (YSLNVTLCVLTLFNLALTYLI) form a helical membrane-spanning segment. The Vacuolar portion of the chain corresponds to 169-174 (KYTRQR). A helical membrane pass occupies residues 175–195 (IGFVGTFTYLWTSFSFFIGAI). At 196–271 (LDWYLLFYNN…EWVSIGFRNT (76 aa)) the chain is on the cytoplasmic side. Residues 225-251 (NENHTNSTENRDRSQYGSGSPTPTHRS) form a disordered region. Residues 239–251 (QYGSGSPTPTHRS) show a composition bias toward polar residues. Ser-244 is modified (phosphoserine). Residues 272–292 (IKFLILIFFALFTLNTLLTTL) traverse the membrane as a helical segment. The Vacuolar segment spans residues 293 to 644 (DTYRLTHKLP…IGELGKLTED (352 aa)). One can recognise an AB hydrolase-1 domain in the interval 348 to 619 (PIILFEHGGY…IVEGGHEIYK (272 aa)). The segment at 469–492 (GRGDGDDGDDGNGNDGDGRNHDKT) is disordered.

It localises to the vacuole membrane. This is an uncharacterized protein from Saccharomyces cerevisiae (strain ATCC 204508 / S288c) (Baker's yeast).